The primary structure comprises 63 residues: Cecropin-B (63 aa).

Positions 1–22 (MNFAKILSFVFALVLALSMTSA) are cleaved as a signal peptide. The propeptide at 23–26 (APEP) is removed by a dipeptidylpeptidase. 5-hydroxylysine; partial is present on Lys47. The residue at position 61 (Ile61) is an Isoleucine amide.

This sequence belongs to the cecropin family. Lepidopteran-B differs from lepidopteran-A by its hydroxylated residue. Highest expression in fat body and hemocytes. Is also expressed in Malpighian tubules and to a much lesser extent in midgut. Not present in silk gland.

It is found in the secreted. Cecropins have lytic and antibacterial activity against several Gram-positive and Gram-negative bacteria. This chain is Cecropin-B (CECB1), found in Bombyx mori (Silk moth).